The chain runs to 480 residues: UDP-glucose 6-dehydrogenase 3 (480 aa).

NAD(+) contacts are provided by residues 8–13, D33, R38, 86–90, 127–128, and E161; these read GAGYVG, VNTPT, and ST. Residues 157–161, 216–223, and 256–269 contribute to the substrate site; these read EFLAE, KLAANAFL, and RIGP…VGFG. C272 serves as the catalytic Nucleophile. Position 272-275 (272-275) interacts with NAD(+); the sequence is CFQK. Residue 334 to 335 participates in substrate binding; sequence FK. An NAD(+)-binding site is contributed by R342. At S393 the chain carries Phosphoserine. R447 contributes to the substrate binding site.

This sequence belongs to the UDP-glucose/GDP-mannose dehydrogenase family.

The enzyme catalyses UDP-alpha-D-glucose + 2 NAD(+) + H2O = UDP-alpha-D-glucuronate + 2 NADH + 3 H(+). The protein operates within nucleotide-sugar biosynthesis; UDP-alpha-D-glucuronate biosynthesis; UDP-alpha-D-glucuronate from UDP-alpha-D-glucose: step 1/1. Involved in the biosynthesis of UDP-glucuronic acid (UDP-GlcA), providing nucleotide sugars for cell-wall polymers. This Oryza sativa subsp. japonica (Rice) protein is UDP-glucose 6-dehydrogenase 3 (UGD3).